We begin with the raw amino-acid sequence, 454 residues long: Probable mitochondrial saccharopine dehydrogenase-like oxidoreductase At5g39410 (454 aa).

N-acetylmethionine is present on methionine 1. A disordered region spans residues 215–234 (RRSRPRRPRPTICGPPAKGP).

Belongs to the saccharopine dehydrogenase family.

The protein localises to the mitochondrion membrane. This Arabidopsis thaliana (Mouse-ear cress) protein is Probable mitochondrial saccharopine dehydrogenase-like oxidoreductase At5g39410.